Reading from the N-terminus, the 141-residue chain is Large ribosomal subunit protein uL11 (141 aa).

The protein belongs to the universal ribosomal protein uL11 family. In terms of assembly, part of the ribosomal stalk of the 50S ribosomal subunit. Interacts with L10 and the large rRNA to form the base of the stalk. L10 forms an elongated spine to which L12 dimers bind in a sequential fashion forming a multimeric L10(L12)X complex. One or more lysine residues are methylated.

Its function is as follows. Forms part of the ribosomal stalk which helps the ribosome interact with GTP-bound translation factors. The polypeptide is Large ribosomal subunit protein uL11 (Prochlorococcus marinus (strain MIT 9211)).